We begin with the raw amino-acid sequence, 380 residues long: Heme A synthase (380 aa).

8 helical membrane passes run Ile36–Leu56, Val125–Ala145, Leu151–Ser171, Leu187–Gln207, Phe227–Val247, Leu287–Trp307, Phe320–Val340, and Ala344–Leu364. His292 contacts heme. Heme is bound at residue His352.

The protein belongs to the COX15/CtaA family. Type 2 subfamily. As to quaternary structure, interacts with CtaB. Heme b is required as a cofactor.

Its subcellular location is the cell membrane. The enzyme catalyses Fe(II)-heme o + 2 A + H2O = Fe(II)-heme a + 2 AH2. It functions in the pathway porphyrin-containing compound metabolism; heme A biosynthesis; heme A from heme O: step 1/1. Its function is as follows. Catalyzes the conversion of heme O to heme A by two successive hydroxylations of the methyl group at C8. The first hydroxylation forms heme I, the second hydroxylation results in an unstable dihydroxymethyl group, which spontaneously dehydrates, resulting in the formyl group of heme A. The polypeptide is Heme A synthase (Ruegeria pomeroyi (strain ATCC 700808 / DSM 15171 / DSS-3) (Silicibacter pomeroyi)).